The following is a 198-amino-acid chain: Imidazole glycerol phosphate synthase subunit HisH (198 aa).

One can recognise a Glutamine amidotransferase type-1 domain in the interval 2 to 198 (KALLIDYGSG…ALARRYFEVL (197 aa)). The active-site Nucleophile is cysteine 80. Catalysis depends on residues histidine 176 and glutamate 178.

In terms of assembly, heterodimer of HisH and HisF.

It localises to the cytoplasm. It catalyses the reaction 5-[(5-phospho-1-deoxy-D-ribulos-1-ylimino)methylamino]-1-(5-phospho-beta-D-ribosyl)imidazole-4-carboxamide + L-glutamine = D-erythro-1-(imidazol-4-yl)glycerol 3-phosphate + 5-amino-1-(5-phospho-beta-D-ribosyl)imidazole-4-carboxamide + L-glutamate + H(+). It carries out the reaction L-glutamine + H2O = L-glutamate + NH4(+). It participates in amino-acid biosynthesis; L-histidine biosynthesis; L-histidine from 5-phospho-alpha-D-ribose 1-diphosphate: step 5/9. Its function is as follows. IGPS catalyzes the conversion of PRFAR and glutamine to IGP, AICAR and glutamate. The HisH subunit catalyzes the hydrolysis of glutamine to glutamate and ammonia as part of the synthesis of IGP and AICAR. The resulting ammonia molecule is channeled to the active site of HisF. The polypeptide is Imidazole glycerol phosphate synthase subunit HisH (Thermus thermophilus (strain ATCC BAA-163 / DSM 7039 / HB27)).